Reading from the N-terminus, the 492-residue chain is Catalase isozyme 2 (492 aa).

Residues His-65 and Asn-138 contribute to the active site. Tyr-348 contributes to the heme binding site.

It belongs to the catalase family. In terms of assembly, homotetramer. Heme serves as cofactor.

It localises to the peroxisome. The protein localises to the glyoxysome. It carries out the reaction 2 H2O2 = O2 + 2 H2O. Functionally, occurs in almost all aerobically respiring organisms and serves to protect cells from the toxic effects of hydrogen peroxide. The chain is Catalase isozyme 2 (CAT2) from Solanum tuberosum (Potato).